Reading from the N-terminus, the 488-residue chain is MKKLTALFNLPELKNDIELHNMVLDSRKVKAGDLFVAIKGHQVDGNQFIDSALHSGASAVVSETELSSEHLTVAFIRNVPVVKYYQLARHLSSLADVFYDSPSKNLTLVGVTGTNGKTTISQLLAQWAELLGHRAAVMGTIGNGLLGQIVEAKNTTGSAVEIQSSLSTFKHAGADFTSIEVSSHGLAQHRVEALHFKAAIFTNLTRDHLDYHQSMENYAAAKKRLFTELDTQIKVINADDEIGYQWLTELPDAIAVSMNADFKVGSHQWMKAINIHYHFKGADITFESSWGNGVLHSPLIGAFNVSNLLLVMTTLLSFGYPLENLLATAKSLKGVCGRMEMIQYPNKPIVIVDYAHTPDALEKALIAAREHCQGELWCIFGCGGDRDRGKRPLMAQVAEQFAEKIIVTKDNPRTEPQSQIEADIVAGFKNMEKVGIIPDRAQAIQFAIESAVENDVILIAGKGHEHYQIIGSEVVHFSDQEIALDFLK.

Residues L24, S26, and 41–43 (HQV) contribute to the UDP-N-acetyl-alpha-D-muramoyl-L-alanyl-D-glutamate site. Position 113–119 (113–119 (GTNGKTT)) interacts with ATP. Residues N154, 155–156 (TT), S182, Q188, and R190 each bind UDP-N-acetyl-alpha-D-muramoyl-L-alanyl-D-glutamate. K222 carries the post-translational modification N6-carboxylysine. Residues R386, 410–413 (DNPR), G461, and E465 each bind meso-2,6-diaminopimelate. Residues 410-413 (DNPR) carry the Meso-diaminopimelate recognition motif motif.

This sequence belongs to the MurCDEF family. MurE subfamily. Mg(2+) serves as cofactor. In terms of processing, carboxylation is probably crucial for Mg(2+) binding and, consequently, for the gamma-phosphate positioning of ATP.

Its subcellular location is the cytoplasm. It catalyses the reaction UDP-N-acetyl-alpha-D-muramoyl-L-alanyl-D-glutamate + meso-2,6-diaminopimelate + ATP = UDP-N-acetyl-alpha-D-muramoyl-L-alanyl-gamma-D-glutamyl-meso-2,6-diaminopimelate + ADP + phosphate + H(+). Its pathway is cell wall biogenesis; peptidoglycan biosynthesis. Functionally, catalyzes the addition of meso-diaminopimelic acid to the nucleotide precursor UDP-N-acetylmuramoyl-L-alanyl-D-glutamate (UMAG) in the biosynthesis of bacterial cell-wall peptidoglycan. This Haemophilus influenzae (strain 86-028NP) protein is UDP-N-acetylmuramoyl-L-alanyl-D-glutamate--2,6-diaminopimelate ligase.